The following is a 170-amino-acid chain: Photosystem I assembly protein Ycf3 (170 aa).

TPR repeat units follow at residues 35–68 (AFTYYRDGMLAQSEGNYAEALQNYYEAMRLEIDP), 72–105 (SYILYNIGLIHTSNGEHTKALEYYFRALERNPFL), and 120–153 (GEQAILQGDSEIAEAWFDQAAEYWKQAIALTPGN).

This sequence belongs to the Ycf3 family.

The protein resides in the plastid. It localises to the chloroplast thylakoid membrane. Its function is as follows. Essential for the assembly of the photosystem I (PSI) complex. May act as a chaperone-like factor to guide the assembly of the PSI subunits. The sequence is that of Photosystem I assembly protein Ycf3 from Oryza sativa (Rice).